The sequence spans 622 residues: Low affinity potassium transport system protein Kup (622 aa).

Transmembrane regions (helical) follow at residues 9-29, 49-69, 101-121, 137-157, 163-183, 213-233, 247-267, 276-296, 337-357, 363-383, 395-415, and 419-439; these read LPAL…TSPL, VFGF…IKYI, VLVI…VITP, PQLD…LFVI, GMVG…LAVL, VSFI…ALYA, WFSV…ALLL, PFFL…ATLA, IYIP…IVSF, LAAA…ILSA, LFVG…FSAN, and IVSG…VMTT.

The protein belongs to the HAK/KUP transporter (TC 2.A.72) family.

The protein resides in the cell inner membrane. It carries out the reaction K(+)(in) + H(+)(in) = K(+)(out) + H(+)(out). In terms of biological role, responsible for the low-affinity transport of potassium into the cell. Likely operates as a K(+):H(+) symporter. The sequence is that of Low affinity potassium transport system protein Kup from Klebsiella pneumoniae subsp. pneumoniae (strain ATCC 700721 / MGH 78578).